The primary structure comprises 315 residues: Triosephosphate isomerase, chloroplastic (315 aa).

The transit peptide at M1–M60 directs the protein to the chloroplast. Substrate is bound by residues N71 and K73. H155 functions as the Electrophile in the catalytic mechanism. S178 carries the post-translational modification Phosphoserine. The active-site Proton acceptor is the E225.

The protein belongs to the triosephosphate isomerase family. As to quaternary structure, homodimer.

The protein resides in the plastid. The protein localises to the chloroplast. It catalyses the reaction D-glyceraldehyde 3-phosphate = dihydroxyacetone phosphate. It participates in carbohydrate biosynthesis; Calvin cycle. This chain is Triosephosphate isomerase, chloroplastic (TIM), found in Arabidopsis thaliana (Mouse-ear cress).